A 648-amino-acid polypeptide reads, in one-letter code: Macrolide export ATP-binding/permease protein MacB (648 aa).

Residues 5-243 (LELKDIRRSY…AGGTEPVVNT (239 aa)) form the ABC transporter domain. Residue 41–48 (GASGSGKS) participates in ATP binding. A run of 4 helical transmembrane segments spans residues 273 to 293 (LLTM…VVVG), 523 to 543 (LFLT…VMNI), 576 to 596 (AVLV…LIAF), and 600 to 620 (LFLP…AFLC).

It belongs to the ABC transporter superfamily. Macrolide exporter (TC 3.A.1.122) family. As to quaternary structure, homodimer. Part of the tripartite efflux system MacAB-TolC, which is composed of an inner membrane transporter, MacB, a periplasmic membrane fusion protein, MacA, and an outer membrane component, TolC. The complex forms a large protein conduit and can translocate molecules across both the inner and outer membranes. Interacts with MacA.

It localises to the cell inner membrane. Part of the tripartite efflux system MacAB-TolC. MacB is a non-canonical ABC transporter that contains transmembrane domains (TMD), which form a pore in the inner membrane, and an ATP-binding domain (NBD), which is responsible for energy generation. Confers resistance against macrolides. The polypeptide is Macrolide export ATP-binding/permease protein MacB (Shigella sonnei (strain Ss046)).